Consider the following 660-residue polypeptide: Iron(3+)-hydroxamate import system permease protein FhuB (660 aa).

Helical transmembrane passes span 5 to 25, 62 to 82, 93 to 113, 118 to 138, 147 to 167, 197 to 217, 240 to 260, 277 to 297, 303 to 323, 348 to 368, 391 to 411, 424 to 444, 447 to 467, 479 to 499, 528 to 548, 567 to 587, 607 to 627, and 635 to 655; these read IALF…ALTW, LAIS…FQQV, LGVA…AIPG, QFAA…VAWG, ILAG…LVIF, QLLG…LMGL, AIVI…IGLF, LMLA…IILW, MEVS…LWLL, LAFA…ALSF, WPRI…GCII, VLGI…LVPG, FGWL…IIMI, MLLA…MLQA, GIVM…LTIL, IALL…IGPL, MPHI…ADWC, and FQIP…IYLL.

It belongs to the binding-protein-dependent transport system permease family. FecCD subfamily. As to quaternary structure, the complex is composed of two ATP-binding proteins (FhuC), a transmembrane protein (FhuB) and a solute-binding protein (FhuD). FhuB interacts with FhuC. FhuB interacts with FhuD. FhuB binds substrate-loaded FhuD more strongly than FhuD alone.

It is found in the cell inner membrane. In terms of biological role, part of the ABC transporter complex FhuCDB involved in iron(3+)-hydroxamate import. Responsible for the translocation of the substrate across the membrane. The sequence is that of Iron(3+)-hydroxamate import system permease protein FhuB (fhuB) from Escherichia coli (strain K12).